A 214-amino-acid chain; its full sequence is Ribosomal RNA small subunit methyltransferase G (214 aa).

S-adenosyl-L-methionine is bound by residues Gly73, Leu78, 124–125, and Arg139; that span reads VE.

The protein belongs to the methyltransferase superfamily. RNA methyltransferase RsmG family.

The protein resides in the cytoplasm. The catalysed reaction is guanosine(527) in 16S rRNA + S-adenosyl-L-methionine = N(7)-methylguanosine(527) in 16S rRNA + S-adenosyl-L-homocysteine. Specifically methylates the N7 position of guanine in position 527 of 16S rRNA. This chain is Ribosomal RNA small subunit methyltransferase G, found in Aeromonas hydrophila subsp. hydrophila (strain ATCC 7966 / DSM 30187 / BCRC 13018 / CCUG 14551 / JCM 1027 / KCTC 2358 / NCIMB 9240 / NCTC 8049).